Reading from the N-terminus, the 223-residue chain is MNRFLIAIDGPAGSGKSSVAKLVAQKMNMNYLDTGAMYRAVALYLHSKGLSAKDDLKKHLAEIDIEYIDGELYLNKKKVSDEIRSSEAGKLASDFATIPAVRERLTQIQRHICQNGKFVVEGRDIGTVVLPEADVKIFLTASFKERVRRRFEELKAKNMNLTMEDIADQIKIRDRQDSSRSIAPLKPAEDAIVIDTTSKDINEVADEICQIAFRRIKVEDNCC.

10–18 (GPAGSGKSS) contacts ATP.

The protein belongs to the cytidylate kinase family. Type 1 subfamily.

The protein resides in the cytoplasm. It catalyses the reaction CMP + ATP = CDP + ADP. The catalysed reaction is dCMP + ATP = dCDP + ADP. This is Cytidylate kinase from Pseudothermotoga lettingae (strain ATCC BAA-301 / DSM 14385 / NBRC 107922 / TMO) (Thermotoga lettingae).